Consider the following 209-residue polypeptide: MTNKKQSASSQRWLKEHFDDKYVQEAQKKGWRSRAVFKLDEVQSRDKLLRPAMTVVDLGAAPGSWSQYLAEKVGDKGQVIACDILPMDSLAGVDFLQGDFREEAVLSALLKRIDGKNVDVVLSDMAPNMSGNNSVDQAGSMYLVELALDMCNQVLKKNGAFIVKVFQGEGFDQFLQDVRNSFKTVKIRKPDASRARSREVYIVATGYKL.

S-adenosyl-L-methionine contacts are provided by Gly-63, Trp-65, Asp-83, Asp-99, and Asp-124. Lys-164 serves as the catalytic Proton acceptor.

It belongs to the class I-like SAM-binding methyltransferase superfamily. RNA methyltransferase RlmE family.

The protein resides in the cytoplasm. It carries out the reaction uridine(2552) in 23S rRNA + S-adenosyl-L-methionine = 2'-O-methyluridine(2552) in 23S rRNA + S-adenosyl-L-homocysteine + H(+). Functionally, specifically methylates the uridine in position 2552 of 23S rRNA at the 2'-O position of the ribose in the fully assembled 50S ribosomal subunit. The polypeptide is Ribosomal RNA large subunit methyltransferase E (Pseudoalteromonas translucida (strain TAC 125)).